A 586-amino-acid polypeptide reads, in one-letter code: 2-succinyl-5-enolpyruvyl-6-hydroxy-3-cyclohexene-1-carboxylate synthase (586 aa).

It belongs to the TPP enzyme family. MenD subfamily. As to quaternary structure, homodimer. It depends on Mg(2+) as a cofactor. Mn(2+) is required as a cofactor. Thiamine diphosphate serves as cofactor.

It carries out the reaction isochorismate + 2-oxoglutarate + H(+) = 5-enolpyruvoyl-6-hydroxy-2-succinyl-cyclohex-3-ene-1-carboxylate + CO2. Its pathway is quinol/quinone metabolism; 1,4-dihydroxy-2-naphthoate biosynthesis; 1,4-dihydroxy-2-naphthoate from chorismate: step 2/7. It functions in the pathway cofactor biosynthesis; phylloquinone biosynthesis. Functionally, catalyzes the thiamine diphosphate-dependent decarboxylation of 2-oxoglutarate and the subsequent addition of the resulting succinic semialdehyde-thiamine pyrophosphate anion to isochorismate to yield 2-succinyl-5-enolpyruvyl-6-hydroxy-3-cyclohexene-1-carboxylate (SEPHCHC). The sequence is that of 2-succinyl-5-enolpyruvyl-6-hydroxy-3-cyclohexene-1-carboxylate synthase from Acaryochloris marina (strain MBIC 11017).